Reading from the N-terminus, the 184-residue chain is ATP synthase subunit b, chloroplastic (184 aa).

A helical transmembrane segment spans residues 26 to 48 (ILATNLINLSVVLGVLIFFGKGV).

The protein belongs to the ATPase B chain family. F-type ATPases have 2 components, F(1) - the catalytic core - and F(0) - the membrane proton channel. F(1) has five subunits: alpha(3), beta(3), gamma(1), delta(1), epsilon(1). F(0) has four main subunits: a(1), b(1), b'(1) and c(10-14). The alpha and beta chains form an alternating ring which encloses part of the gamma chain. F(1) is attached to F(0) by a central stalk formed by the gamma and epsilon chains, while a peripheral stalk is formed by the delta, b and b' chains.

The protein localises to the plastid. It localises to the chloroplast thylakoid membrane. F(1)F(0) ATP synthase produces ATP from ADP in the presence of a proton or sodium gradient. F-type ATPases consist of two structural domains, F(1) containing the extramembraneous catalytic core and F(0) containing the membrane proton channel, linked together by a central stalk and a peripheral stalk. During catalysis, ATP synthesis in the catalytic domain of F(1) is coupled via a rotary mechanism of the central stalk subunits to proton translocation. In terms of biological role, component of the F(0) channel, it forms part of the peripheral stalk, linking F(1) to F(0). In Calycanthus floridus var. glaucus (Eastern sweetshrub), this protein is ATP synthase subunit b, chloroplastic.